Consider the following 316-residue polypeptide: Ornithine carbamoyltransferase (316 aa).

Residues 59–62 (STRT), Gln86, Arg110, and 137–140 (HPCQ) contribute to the carbamoyl phosphate site. Residues Asn168, Asp232, and 236 to 237 (SM) each bind L-ornithine. Carbamoyl phosphate is bound by residues 273-274 (CL) and Arg301.

The protein belongs to the aspartate/ornithine carbamoyltransferase superfamily. OTCase family.

The protein resides in the cytoplasm. The catalysed reaction is carbamoyl phosphate + L-ornithine = L-citrulline + phosphate + H(+). It participates in amino-acid degradation; L-arginine degradation via ADI pathway; carbamoyl phosphate from L-arginine: step 2/2. In terms of biological role, reversibly catalyzes the transfer of the carbamoyl group from carbamoyl phosphate (CP) to the N(epsilon) atom of ornithine (ORN) to produce L-citrulline. This chain is Ornithine carbamoyltransferase, found in Listeria monocytogenes serotype 4a (strain HCC23).